The chain runs to 65 residues: Large ribosomal subunit protein bL35 (65 aa).

The tract at residues 23–44 is disordered; the sequence is KRMKAGKQHILTKKSQKTKRNL.

This sequence belongs to the bacterial ribosomal protein bL35 family.

This is Large ribosomal subunit protein bL35 from Lachnoclostridium phytofermentans (strain ATCC 700394 / DSM 18823 / ISDg) (Clostridium phytofermentans).